The primary structure comprises 109 residues: U4-lycotoxin-Ls1b (109 aa).

An N-terminal signal peptide occupies residues M1 to A22. A propeptide spanning residues I23–R44 is cleaved from the precursor. The segment at A45 to C88 is knottin domain. 4 cysteine pairs are disulfide-bonded: C48–C63, C55–C72, C62–C88, and C74–C86. The tract at residues Q89–V108 is linear cationic cytotoxin domain.

The protein belongs to the neurotoxin 19 (CSTX) family. 05 (U4-Lctx) subfamily. Expressed by the venom gland.

Its subcellular location is the secreted. In terms of biological role, enhances the high-affinity desensitization of human P2RX3 purinoceptors. This Lycosa singoriensis (Wolf spider) protein is U4-lycotoxin-Ls1b.